The sequence spans 295 residues: MVDSVYRTRSLGVAAEGLPDQYADGEAARVWQLYIGDTRSRTAEYKAWLLGLLRQHGCQRVLDVACGTGVDSIMLVEEGFSVTSVDASDKMLKYALKERWNRRHEPAFDKWVIEEANWMTLDKDVPQSAEGGFDAVICLGNSFAHLPDCKGDQSEHRLALKNIASMVRAGGLLVIDHRNYDHILSTGCAPPGKNIYYKSDLTKDVTTSVLIVNNKAHMVTLDYTVQVPGAGQDGSPGLSKFRLSYYPHCLASFTELLQAAFGGKCQHSVLGDFKPYKPGQTYIPCYFIHVLKRTD.

Position 2 is an N-acetylvaline (Val-2). (6S)-5-methyl-5,6,7,8-tetrahydrofolate contacts are provided by Ser-4 and Tyr-6. Residue Ser-10 is modified to Phosphoserine. Residues Tyr-22, Trp-31, Tyr-34, and Arg-41 each coordinate S-adenosyl-L-methionine. A Phosphotyrosine modification is found at Tyr-34. At Lys-46 the chain carries N6-succinyllysine. S-adenosyl-L-methionine-binding positions include Ala-65, 86–88, 117–118, 139–142, and Arg-178; these read DAS, NW, and LGNS. Lys-193, Lys-198, and Lys-203 each carry N6-succinyllysine. Residue His-217 coordinates (6S)-5-methyl-5,6,7,8-tetrahydrofolate. Tyr-223 contacts S-adenosyl-L-methionine. Arg-242 serves as a coordination point for (6S)-5-methyl-5,6,7,8-tetrahydrofolate.

Belongs to the class I-like SAM-binding methyltransferase superfamily. Glycine N-methyltransferase family. Homotetramer. In terms of tissue distribution, expressed only in liver, pancreas, and prostate.

It is found in the cytoplasm. The enzyme catalyses glycine + S-adenosyl-L-methionine = sarcosine + S-adenosyl-L-homocysteine + H(+). With respect to regulation, inhibited by 5-methyltetrahydrofolate monoglutamate and by 5-methyltetrahydrofolate pentaglutamate, inhibition is much more effective by the pentaglutamate form than by the monoglutamate form. Two molecules of 5-methyltetrahydrofolate are bound per tetramer. The binding sites are localized between subunits. Inhibitor binding may preclude movements of the polypeptide chain that are necessary for enzyme activity. Functionally, catalyzes the methylation of glycine by using S-adenosylmethionine (AdoMet) to form N-methylglycine (sarcosine) with the concomitant production of S-adenosylhomocysteine (AdoHcy), a reaction regulated by the binding of 5-methyltetrahydrofolate. Plays an important role in the regulation of methyl group metabolism by regulating the ratio between S-adenosyl-L-methionine and S-adenosyl-L-homocysteine. The chain is Glycine N-methyltransferase from Homo sapiens (Human).